Here is a 123-residue protein sequence, read N- to C-terminus: Galanin peptides (123 aa).

The signal sequence occupies residues 1–19 (MPRGCALLLASLLLASALS). A propeptide spanning residues 20 to 30 (ATLGLGSPVKE) is cleaved from the precursor. Position 61 is an alanine amide (Ala-61). 2 positions are modified to phosphoserine: Ser-116 and Ser-117.

This sequence belongs to the galanin family.

It is found in the secreted. In terms of biological role, endocrine hormone of the central and peripheral nervous systems that binds and activates the G protein-coupled receptors GALR1, GALR2, and GALR3. This small neuropeptide may regulate diverse physiologic functions including contraction of smooth muscle of the gastrointestinal and genitourinary tract, growth hormone and insulin release and adrenal secretion. This is Galanin peptides (GAL) from Sus scrofa (Pig).